The primary structure comprises 266 residues: Phosphatidylglycerol--prolipoprotein diacylglyceryl transferase (266 aa).

The next 7 helical transmembrane spans lie at 19–39 (IWGP…FAFA), 61–81 (LMFW…TLFY), 91–111 (LYLF…LGVI), 125–145 (FLQV…FGRI), 176–196 (PSQL…ILWF), 204–224 (GAVS…VEFF), and 237–257 (GMSM…ILMV). A 1,2-diacyl-sn-glycero-3-phospho-(1'-sn-glycerol) is bound at residue Arg-144.

The protein belongs to the Lgt family.

Its subcellular location is the cell inner membrane. The catalysed reaction is L-cysteinyl-[prolipoprotein] + a 1,2-diacyl-sn-glycero-3-phospho-(1'-sn-glycerol) = an S-1,2-diacyl-sn-glyceryl-L-cysteinyl-[prolipoprotein] + sn-glycerol 1-phosphate + H(+). Its pathway is protein modification; lipoprotein biosynthesis (diacylglyceryl transfer). Functionally, catalyzes the transfer of the diacylglyceryl group from phosphatidylglycerol to the sulfhydryl group of the N-terminal cysteine of a prolipoprotein, the first step in the formation of mature lipoproteins. The chain is Phosphatidylglycerol--prolipoprotein diacylglyceryl transferase from Idiomarina loihiensis (strain ATCC BAA-735 / DSM 15497 / L2-TR).